The primary structure comprises 396 residues: Elongation factor Tu (396 aa).

Residues 10-205 form the tr-type G domain; that stretch reads KTHANIGTIG…AVDDYIPTPE (196 aa). Residues 19–26 form a G1 region; that stretch reads GHVDHGKT. 19–26 is a GTP binding site; it reads GHVDHGKT. Threonine 26 is a Mg(2+) binding site. The interval 61–65 is G2; it reads GITIS. The G3 stretch occupies residues 82–85; that stretch reads DCPG. GTP-binding positions include 82–86 and 137–140; these read DCPGH and NKCD. Positions 137–140 are G4; that stretch reads NKCD. The G5 stretch occupies residues 175-177; the sequence is SAL.

This sequence belongs to the TRAFAC class translation factor GTPase superfamily. Classic translation factor GTPase family. EF-Tu/EF-1A subfamily. As to quaternary structure, monomer.

It is found in the cytoplasm. The enzyme catalyses GTP + H2O = GDP + phosphate + H(+). Its function is as follows. GTP hydrolase that promotes the GTP-dependent binding of aminoacyl-tRNA to the A-site of ribosomes during protein biosynthesis. This Halalkalibacterium halodurans (strain ATCC BAA-125 / DSM 18197 / FERM 7344 / JCM 9153 / C-125) (Bacillus halodurans) protein is Elongation factor Tu.